Consider the following 251-residue polypeptide: MVKKSYPEVKEEYKKAVQRCKRKLRGLIAEKHCAPIVLRLAWHSAGTFDVKTKTGGPFGTIRHPQELAHDANNGLDIAVRLLDPIKELFPILSYADFYQLAGVVAVEITGGPEIPFHPGRLDKVEPPPEGRLPQATKGVDHLRDVFGRMGLNDKDIVALSGGHTLGRCHKERSGFEGAWTPNPLIFDNSYFKEILSGEKEGLLQLPTDKALLDDPLFLPFVEKYAADEDAFFEDYTEAHLKLSELGFADKE.

The active-site Proton acceptor is the histidine 43. Histidine 163 provides a ligand contact to heme b. Positions 164, 180, 182, 185, and 187 each coordinate K(+).

Belongs to the peroxidase family. Ascorbate peroxidase subfamily. It depends on heme b as a cofactor. Detected in bundle sheath cells, the photosynthetic cells that surround the phloem and xylem.

Its subcellular location is the cytoplasm. It carries out the reaction L-ascorbate + H2O2 = L-dehydroascorbate + 2 H2O. Plays a key role in hydrogen peroxide removal. The polypeptide is L-ascorbate peroxidase 2, cytosolic (Arabidopsis thaliana (Mouse-ear cress)).